The chain runs to 264 residues: Small ribosomal subunit protein uS2 (264 aa).

The interval 233–264 is disordered; sequence AQTQAGGKAEQEAPATEEAADAQTEEAATPAE.

The protein belongs to the universal ribosomal protein uS2 family.

The sequence is that of Small ribosomal subunit protein uS2 from Psychrobacter arcticus (strain DSM 17307 / VKM B-2377 / 273-4).